Here is a 249-residue protein sequence, read N- to C-terminus: MAGHSKWANIKRQKARVDAKKGSLFTKLSRAIIVAARNGLPDPDGNFQLRAAVEKAKAAGMPSENIERAIAKGAGNWSDDSPLEEVRYEGYGPGGVAVLIEAMTDNRNRTAAEVREAFSKTGGSLGEAGCVSWLFRQKGVISLEEVLDPEALLLAVAEAGGDDFKVEGTGAEVYCDYSLLEQVATYLKKEGYPVQDAAIRWIPSTEVHVEDPDTAKSVLALMERLDNLDDVQNVYANFEIDEAVMESLA.

The protein belongs to the TACO1 family.

The protein localises to the cytoplasm. The sequence is that of Probable transcriptional regulatory protein CYB_1350 from Synechococcus sp. (strain JA-2-3B'a(2-13)) (Cyanobacteria bacterium Yellowstone B-Prime).